A 216-amino-acid chain; its full sequence is Alanyl-tRNA editing protein AlaX-M (216 aa).

Positions 99, 103, and 182 each coordinate Zn(2+).

It belongs to the class-II aminoacyl-tRNA synthetase family. Editing domain AlaX-M subfamily. As to quaternary structure, monomer. The cofactor is Zn(2+).

The protein localises to the cytoplasm. Functions in trans to edit the amino acid moiety from mischarged charged Gly-tRNA(Ala) and Ser-tRNA(Ala). This chain is Alanyl-tRNA editing protein AlaX-M (alaXM), found in Pyrococcus horikoshii (strain ATCC 700860 / DSM 12428 / JCM 9974 / NBRC 100139 / OT-3).